We begin with the raw amino-acid sequence, 92 residues long: MSSITRDSQPALRAGVRLQHDRTRDQWVLLAPERVVELDEIALVVAQRYDGTRSLAQIAQELAAEFDADAADIEADVIELTATLQQKRLLRL.

Belongs to the PqqD family. As to quaternary structure, monomer. Interacts with PqqE.

It participates in cofactor biosynthesis; pyrroloquinoline quinone biosynthesis. Functions as a PqqA binding protein and presents PqqA to PqqE, in the pyrroloquinoline quinone (PQQ) biosynthetic pathway. The protein is PqqA binding protein of Xanthomonas oryzae pv. oryzae (strain MAFF 311018).